Here is a 418-residue protein sequence, read N- to C-terminus: Serine hydroxymethyltransferase 2 (418 aa).

Residues L121 and 125 to 127 (GHL) each bind (6S)-5,6,7,8-tetrahydrofolate. K230 is subject to N6-(pyridoxal phosphate)lysine. (6S)-5,6,7,8-tetrahydrofolate is bound at residue 355–357 (SPF).

It belongs to the SHMT family. As to quaternary structure, homodimer. Requires pyridoxal 5'-phosphate as cofactor.

It is found in the cytoplasm. The enzyme catalyses (6R)-5,10-methylene-5,6,7,8-tetrahydrofolate + glycine + H2O = (6S)-5,6,7,8-tetrahydrofolate + L-serine. It participates in one-carbon metabolism; tetrahydrofolate interconversion. Its pathway is amino-acid biosynthesis; glycine biosynthesis; glycine from L-serine: step 1/1. Its function is as follows. Catalyzes the reversible interconversion of serine and glycine with tetrahydrofolate (THF) serving as the one-carbon carrier. This reaction serves as the major source of one-carbon groups required for the biosynthesis of purines, thymidylate, methionine, and other important biomolecules. Also exhibits THF-independent aldolase activity toward beta-hydroxyamino acids, producing glycine and aldehydes, via a retro-aldol mechanism. The protein is Serine hydroxymethyltransferase 2 of Pseudomonas aeruginosa (strain ATCC 15692 / DSM 22644 / CIP 104116 / JCM 14847 / LMG 12228 / 1C / PRS 101 / PAO1).